A 180-amino-acid chain; its full sequence is Large ribosomal subunit protein uL5 (180 aa).

This sequence belongs to the universal ribosomal protein uL5 family. In terms of assembly, part of the 50S ribosomal subunit; part of the 5S rRNA/L5/L18/L25 subcomplex. Contacts the 5S rRNA and the P site tRNA. Forms a bridge to the 30S subunit in the 70S ribosome.

This is one of the proteins that bind and probably mediate the attachment of the 5S RNA into the large ribosomal subunit, where it forms part of the central protuberance. In the 70S ribosome it contacts protein S13 of the 30S subunit (bridge B1b), connecting the 2 subunits; this bridge is implicated in subunit movement. Contacts the P site tRNA; the 5S rRNA and some of its associated proteins might help stabilize positioning of ribosome-bound tRNAs. In Limosilactobacillus fermentum (strain NBRC 3956 / LMG 18251) (Lactobacillus fermentum), this protein is Large ribosomal subunit protein uL5.